We begin with the raw amino-acid sequence, 607 residues long: Rap1 GTPase-GDP dissociation stimulator 1-A (607 aa).

5 ARM repeats span residues 79–118, 170–211, 347–390, 391–431, and 479–519; these read ELMR…NICY, DSLQ…NLAE, DGNC…NLAI, PVVN…MLID, and SKDV…LIAA.

In terms of assembly, interacts with ralB. Probably interacts with the post-translationally isoprenylated (geranyl-geranylation) forms of ral proteins. Interacts with both GDP-bound and GTP-bound forms of ralA, but interaction is much stronger with ralA-GDP. As to expression, weakly expressed in adult tissues with highest levels found in spleen, kidney, skin and A6 cells.

It is found in the cytoplasm. Its subcellular location is the cytosol. It localises to the endoplasmic reticulum. The protein resides in the mitochondrion. Functionally, stimulates GDP/GTP exchange reaction of a group of small GTP-binding proteins (G proteins) including Rap1a/Rap1b, RhoA, RhoB and KRas, by stimulating the dissociation of GDP from and the subsequent binding of GTP to each small G protein. The polypeptide is Rap1 GTPase-GDP dissociation stimulator 1-A (rap1gds1-a) (Xenopus laevis (African clawed frog)).